The following is a 432-amino-acid chain: Monooxygenase penA (432 aa).

A helical transmembrane segment spans residues 7 to 29; that stretch reads FKIAIIGAGPAGLTLASLLTASP. N-linked (GlcNAc...) asparagine glycosylation is present at Asn33.

The protein belongs to the aromatic-ring hydroxylase family. FAD serves as cofactor.

It is found in the membrane. The protein operates within secondary metabolite biosynthesis. It participates in alkaloid biosynthesis. Its pathway is mycotoxin biosynthesis. Monooxygenase; part of the gene cluster that mediates the biosynthesis of penigequinolones, potent insecticidal alkaloids that contain a highly modified 10-carbon prenyl group. The first stage is catalyzed by the nonribosomal peptide synthetase penN that condenses anthranilic acid and O-methyl-L-tyrosine to produce 4'-methoxycyclopeptin. 4'-methoxycyclopeptin is then converted to 4'-methoxydehydrocyclopeptin by the ketoglutarate-dependent dioxygenase penM through dehydrogenation to form a double bond between C-alpha and C-beta of the O-methyltyrosine side chain. PenM also converts its first product methoxydehydrocyclopeptin to 4'-methoxycyclopenin. The following conversion of 4'methoxycyclopenin into 4'-methoxyviridicatin is catalyzed by the cyclopenase penL. 4'-methoxyviridicatin is the precursor of quinolone natural products, and is further converted to quinolinone B. The prenyltransferase penI then catalyzes the canonical Friedel-Crafts alkylation of quinolinone B with dimethylallyl cation to yield dimethylallyl quinolone, which is subjected to FAD-dependent dehydrogenation by the FAD-linked oxidoreductase penH to yield conjugated aryl diene. The delta(3') double bond then serves as the site of the second alkylation with DMAPP catalyzed by the prenyltransferase penG to yield a carbenium ion intermediate, which can be attacked by H(2)O to yield a styrenyl quinolone containing a C3'-hydroxyprenyl chain, or undergo cyclization to yield yaequinolones J1 and J2. The conversion of the styrenyl quinolone into the tetrahydrofuran-containing yaequinolone C is performed by the FAD-dependent monooxygenase penE and involves epoxidation of the terminal C7'-C8' olefin, followed by epoxide ring opening initiated by the C3' hydroxyl group. The predicted cysteine hydrolase penJ acts as an epoxide hydrolase that enhances the rate of the 5-exo-tet cyclization step, increasing the yield of yaequinolone C. PenF catalyzes the cationic rearrangement of the epoxide formed by penE (before ring opening to produce yaequinolone C) into yaequinolone D. Finally, the short-chain dehydrogenase/reductase (SDR)-like reductase penD, catalyzes both the dehydration of yaequinolone D and the reduction of the resulting oxonium to yield penigequinolone. The sequence is that of Monooxygenase penA from Penicillium thymicola.